The following is a 262-amino-acid chain: Ribosomal RNA small subunit methyltransferase A (262 aa).

Residues Asn-14, Leu-16, Gly-41, Glu-62, Asp-87, and Asn-109 each contribute to the S-adenosyl-L-methionine site.

The protein belongs to the class I-like SAM-binding methyltransferase superfamily. rRNA adenine N(6)-methyltransferase family. RsmA subfamily.

The protein localises to the cytoplasm. The enzyme catalyses adenosine(1518)/adenosine(1519) in 16S rRNA + 4 S-adenosyl-L-methionine = N(6)-dimethyladenosine(1518)/N(6)-dimethyladenosine(1519) in 16S rRNA + 4 S-adenosyl-L-homocysteine + 4 H(+). Functionally, specifically dimethylates two adjacent adenosines (A1518 and A1519) in the loop of a conserved hairpin near the 3'-end of 16S rRNA in the 30S particle. May play a critical role in biogenesis of 30S subunits. This chain is Ribosomal RNA small subunit methyltransferase A, found in Francisella tularensis subsp. holarctica (strain FTNF002-00 / FTA).